The following is a 470-amino-acid chain: Dendritic cell-specific transmembrane protein (470 aa).

Over 1–34 (MGIWTSGTDIFLSLWEIYVSPRSPGWMDFIQHLG) the chain is Cytoplasmic. The helical transmembrane segment at 35–55 (VCCLVALISVGLLSVAACWFL) threads the bilayer. The Extracellular portion of the chain corresponds to 56–57 (PS). A helical transmembrane segment spans residues 58–78 (IIAAAASWIITCVLLCCSKHA). Residues 79-97 (RCFILLVFLSCGLREGRNA) lie on the Cytoplasmic side of the membrane. Residues 98–118 (LIAAGTGIVILGHVENIFHNF) form a helical membrane-spanning segment. Over 119 to 209 (KGLLDGMTCN…MATTTEVLSS (91 aa)) the chain is Extracellular. Residues 210 to 230 (LGQKLLAFAGLSLVLLGTGLF) form a helical membrane-spanning segment. Residues 231 to 292 (MKRFLGPCGW…FWPTPKERKN (62 aa)) lie on the Cytoplasmic side of the membrane. Residues 293–313 (LGLFFLPILIHLCIWVLFAAV) form a helical membrane-spanning segment. The Extracellular portion of the chain corresponds to 314–376 (DYLLYRLIFS…PKPKFLLSET (63 aa)). Residues 377 to 397 (WVPLSVILLILVMLGLLSSIL) traverse the membrane as a helical segment. Over 398–470 (MQLKILVSAS…QMDMASADKS (73 aa)) the chain is Cytoplasmic.

Monomer. Homodimer. Isoform 1 interacts (via the C-terminus cytoplasmic tail) with OS9 isoform 1 (via the C-terminus tail); the interaction induces DCSTAMP redistribution to the endoplasmic reticulum-Golgi intermediate compartment. Isoform 1 interacts (via the C-terminus cytoplasmic tail) with OS9 isoform 2 (via the C-terminus tail). Interacts with CREB3. In terms of processing, glycosylated. In terms of tissue distribution, preferentially expressed by dendritic cells (DCs). Detected in both immature and mature DCs. Highly expressed in lymph nodes, lung, kidney and liver. Expressed at lower levels in pancreas, bone marrow, spleen, leukocytes, in freshly isolated peripheral blood mononuclear cells (PBMC) and B-cells. Not expressed in freshly isolated monocytes.

Its subcellular location is the cell membrane. The protein resides in the endoplasmic reticulum membrane. It localises to the endoplasmic reticulum-Golgi intermediate compartment membrane. It is found in the endosome. Functionally, probable cell surface receptor that plays several roles in cellular fusion, cell differentiation, bone and immune homeostasis. Plays a role in TNFSF11-mediated osteoclastogenesis. Cooperates with OCSTAMP in modulating cell-cell fusion in both osteoclasts and foreign body giant cells (FBGCs). Participates in osteoclast bone resorption. Involved in inducing the expression of tartrate-resistant acid phosphatase in osteoclast precursors. Plays a role in haematopoietic stem cell differentiation of bone marrow cells toward the myeloid lineage. Inhibits the development of neutrophilic granulocytes. Plays also a role in the regulation of dendritic cell (DC) antigen presentation activity by controlling phagocytic activity. Involved in the maintenance of immune self-tolerance and avoidance of autoimmune reactions. The sequence is that of Dendritic cell-specific transmembrane protein (DCSTAMP) from Homo sapiens (Human).